The sequence spans 142 residues: Baculoviral IAP repeat-containing protein 5 (142 aa).

Residues 18-88 (RVSTFKNWPF…KHSSGCAFLS (71 aa)) form a BIR repeat. Position 20 is a phosphoserine; by AURKC (Ser-20). Position 23 is an N6-acetyllysine (Lys-23). The residue at position 34 (Thr-34) is a Phosphothreonine; by CDK1 and CDK15. Thr-48 bears the Phosphothreonine mark. 4 residues coordinate Zn(2+): Cys-57, Cys-60, His-77, and Cys-84. Lys-90, Lys-110, Lys-112, and Lys-115 each carry N6-acetyllysine. Thr-117 is subject to Phosphothreonine; by AURKB. Lys-129 is subject to N6-acetyllysine.

Belongs to the IAP family. As to quaternary structure, monomer or homodimer. Exists as a homodimer in the apo state and as a monomer in the CPC-bound state. The monomer protects cells against apoptosis more efficiently than the dimer. Only the dimeric form is capable of enhancing tubulin stability in cells. When phosphorylated, interacts with LAMTOR5/HBXIP; the resulting complex binds pro-CASP9, as well as active CASP9, but much less efficiently. Component of the chromosomal passenger complex (CPC) composed of at least BIRC5/survivin, CDCA8/borealin, INCENP, AURKB or AURKC; in the complex forms a triple-helix bundle-based subcomplex with INCENP and CDCA8. Interacts with JTB. Interacts (via BIR domain) with histone H3 phosphorylated at 'Thr-3' (H3pT3). Interacts with EVI5. Interacts with GTP-bound RAN in both the S and M phases of the cell cycle. Interacts with USP9X. Interacts with tubulin. Interacts with BIRC2/c-IAP1. The acetylated form at Lys-129 interacts with STAT3. The monomeric form deacetylated at Lys-129 interacts with XPO1/CRM1. The monomeric form interacts with XIAP/BIRC4. Both the dimeric and monomeric form can interact with DIABLO/SMAC. Interacts with BIRC6/bruce. Interacts with FBXL7; this interaction facilitates the polyubiquitination and subsequent proteasomal degradation of BIRC5 by the SCF(FBXL7) E3 ubiquitin-protein ligase complex. Ubiquitinated by the Cul9-RING ubiquitin-protein ligase complex, leading to its degradation. Ubiquitination is required for centrosomal targeting. Deubiquitinated by USP35 or USP38; leading to stabilization. In terms of processing, acetylation at Lys-129 results in its homodimerization, while deacetylation promotes the formation of monomers which heterodimerize with XPO1/CRM1 which facilitates its nuclear export. The acetylated form represses STAT3 transactivation. The dynamic equilibrium between its acetylation and deacetylation at Lys-129 determines its interaction with XPO1/CRM1, its subsequent subcellular localization, and its ability to inhibit STAT3 transactivation. Post-translationally, in vitro phosphorylation at Thr-117 by AURKB prevents interaction with INCENP and localization to mitotic chromosomes. Phosphorylation at Thr-48 by CK2 is critical for its mitotic and anti-apoptotic activities. Phosphorylation at Thr-34 by CDK15 is critical for its anti-apoptotic activity. Phosphorylation at Ser-20 by AURKC is critical for regulation of proper chromosome alignment and segregation, and possibly cytokinesis.

It is found in the cytoplasm. The protein localises to the nucleus. Its subcellular location is the chromosome. The protein resides in the centromere. It localises to the cytoskeleton. It is found in the spindle. The protein localises to the kinetochore. Its subcellular location is the midbody. In terms of biological role, multitasking protein that has dual roles in promoting cell proliferation and preventing apoptosis. Component of a chromosome passage protein complex (CPC) which is essential for chromosome alignment and segregation during mitosis and cytokinesis. Acts as an important regulator of the localization of this complex; directs CPC movement to different locations from the inner centromere during prometaphase to midbody during cytokinesis and participates in the organization of the center spindle by associating with polymerized microtubules. Involved in the recruitment of CPC to centromeres during early mitosis via association with histone H3 phosphorylated at 'Thr-3' (H3pT3) during mitosis. The complex with RAN plays a role in mitotic spindle formation by serving as a physical scaffold to help deliver the RAN effector molecule TPX2 to microtubules. May counteract a default induction of apoptosis in G2/M phase. The acetylated form represses STAT3 transactivation of target gene promoters. May play a role in neoplasia. Inhibitor of CASP3 and CASP7. Essential for the maintenance of mitochondrial integrity and function. This is Baculoviral IAP repeat-containing protein 5 (BIRC5) from Canis lupus familiaris (Dog).